We begin with the raw amino-acid sequence, 232 residues long: Enolase-phosphatase E1 (232 aa).

This sequence belongs to the HAD-like hydrolase superfamily. MasA/MtnC family. Monomer. Mg(2+) is required as a cofactor.

The catalysed reaction is 5-methylsulfanyl-2,3-dioxopentyl phosphate + H2O = 1,2-dihydroxy-5-(methylsulfanyl)pent-1-en-3-one + phosphate. It functions in the pathway amino-acid biosynthesis; L-methionine biosynthesis via salvage pathway; L-methionine from S-methyl-5-thio-alpha-D-ribose 1-phosphate: step 3/6. The protein operates within amino-acid biosynthesis; L-methionine biosynthesis via salvage pathway; L-methionine from S-methyl-5-thio-alpha-D-ribose 1-phosphate: step 4/6. Its function is as follows. Bifunctional enzyme that catalyzes the enolization of 2,3-diketo-5-methylthiopentyl-1-phosphate (DK-MTP-1-P) into the intermediate 2-hydroxy-3-keto-5-methylthiopentenyl-1-phosphate (HK-MTPenyl-1-P), which is then dephosphorylated to form the acireductone 1,2-dihydroxy-3-keto-5-methylthiopentene (DHK-MTPene). In Xanthomonas oryzae pv. oryzae (strain KACC10331 / KXO85), this protein is Enolase-phosphatase E1.